The primary structure comprises 509 residues: Proto-oncogene tyrosine-protein kinase LCK (509 aa).

Gly2 carries the N-myristoyl glycine lipid modification. An interactions with CD4 and CD8 region spans residues 2 to 72 (GCGCSSHLED…DNLVIALHSY (71 aa)). 2 S-palmitoyl cysteine lipidation sites follow: Cys3 and Cys5. The 61-residue stretch at 61 to 121 (LQDNLVIALH…PFNFVAKANS (61 aa)) folds into the SH3 domain. A Glycyl lysine isopeptide (Lys-Gly) (interchain with G-Cter in ubiquitin) cross-link involves residue Lys99. Ser102 bears the Phosphoserine mark. In terms of domain architecture, SH2 spans 127–224 (WFFKNLSRKD…GLCTRLSRPC (98 aa)). Residues 154–242 (RESESTAGSF…WWEDEWEVPR (89 aa)) form an interaction with PTPRH region. Thr159 is subject to Phosphothreonine. The residue at position 162 (Ser162) is a Phosphoserine. Tyr192 carries the phosphotyrosine modification. At Ser194 the chain carries Phosphoserine. Positions 245–498 (LKLVERLGAG…YLRSVLEDFF (254 aa)) constitute a Protein kinase domain. ATP contacts are provided by residues 251–259 (LGAGQFGEV) and Lys273. A Glycyl lysine isopeptide (Lys-Gly) (interchain with G-Cter in ubiquitin) cross-link involves residue Lys276. Asp364 acts as the Proton acceptor in catalysis. Phosphotyrosine; by autocatalysis is present on Tyr394. At Tyr505 the chain carries Phosphotyrosine; by CSK.

It belongs to the protein kinase superfamily. Tyr protein kinase family. In terms of assembly, binds to the cytoplasmic domain of cell surface receptors, such as AXL, CD2, CD4, CD5, CD8, CD44, CD45 and CD122. Also binds to effector molecules, such as PI4K, VAV1, RASA1, FYB1 and to other protein kinases including CDK1, RAF1, ZAP70 and SYK. Binds to phosphatidylinositol 3'-kinase (PI3K) from T-lymphocytes through its SH3 domain and to the tyrosine phosphorylated form of KHDRBS1/p70 through its SH2 domain. Interacts with SQSTM1. Interacts with phosphorylated LIME1. Interacts with CBLB and PTPRH. Interacts with RUNX3. Forms a signaling complex with EPHA1, PTK2B and PI3-KINASE; upon activation by EFNA1 which may regulate T-lymphocytes migration. Associates with ZAP70 and RHOH; these interactions allow LCK-mediated RHOH and CD3 subunit phosphorylations in the presence of functional ZAP70. Interacts with Saimiriine herpesvirus 2 TIP. Interacts with UNC119; this interaction plays a crucial role in activation of LCK. Interacts with CEACAM1 (via cytoplasmic domain); mediates CEACAM1 phosphorylation resulting in PTPN6 recruitment that dephosphorylates TCR stimulation-induced CD247 and ZAP70. Interacts with CD160. Interacts with CD48. Autophosphorylated on Tyr-394, increasing enzymatic activity, this site is dephosphorylated by PTN22. Phosphorylated on Tyr-505 by CSK, decreasing activity. Dephosphorylated by PTPRC/CD45. Dephosphorylation at Tyr-394 by PTPN2 negatively regulates T-cells differentiation. Dephosphorylation at Tyr-394 by DUSP22 negatively regulates T-cell receptor signaling. In terms of processing, myristoylation is required prior to palmitoylation. Post-translationally, palmitoylation regulates association with the plasma membrane and could be mediated by ZDHHC2. 'Lys-63'-linked ubiquitinated at Lys-99 and Lys-276 by UBR2; this modification is required for autophosphorylation at Tyr-394. Expressed specifically in lymphoid cells.

The protein resides in the cell membrane. It localises to the cytoplasm. Its subcellular location is the cytosol. It catalyses the reaction L-tyrosyl-[protein] + ATP = O-phospho-L-tyrosyl-[protein] + ADP + H(+). Its activity is regulated as follows. The relative activities of the inhibitory tyrosine-protein kinase CSK and the activating tyrosine-protein phosphatase PTPRC/CD45 determine the level of LCK activity. These interactions allow rapid and efficient activation of LCK in response to TCR stimulation. In terms of biological role, non-receptor tyrosine-protein kinase that plays an essential role in the selection and maturation of developing T-cells in the thymus and in the function of mature T-cells. Plays a key role in T-cell antigen receptor (TCR)-linked signal transduction pathways. Constitutively associated with the cytoplasmic portions of the CD4 and CD8 surface receptors. Association of the TCR with a peptide antigen-bound MHC complex facilitates the interaction of CD4 and CD8 with MHC class II and class I molecules, respectively, thereby recruiting the associated LCK protein to the vicinity of the TCR/CD3 complex. LCK then phosphorylates tyrosine residues within the immunoreceptor tyrosine-based activation motifs (ITAM) of the cytoplasmic tails of the TCR-gamma chains and CD3 subunits, initiating the TCR/CD3 signaling pathway. Once stimulated, the TCR recruits the tyrosine kinase ZAP70, that becomes phosphorylated and activated by LCK. Following this, a large number of signaling molecules are recruited, ultimately leading to lymphokine production. LCK also contributes to signaling by other receptor molecules. Associates directly with the cytoplasmic tail of CD2, which leads to hyperphosphorylation and activation of LCK. Also plays a role in the IL2 receptor-linked signaling pathway that controls the T-cell proliferative response. Binding of IL2 to its receptor results in increased activity of LCK. Is expressed at all stages of thymocyte development and is required for the regulation of maturation events that are governed by both pre-TCR and mature alpha beta TCR. Phosphorylates other substrates including RUNX3, PTK2B/PYK2, the microtubule-associated protein MAPT, RHOH or TYROBP. This is Proto-oncogene tyrosine-protein kinase LCK (LCK) from Saimiri sciureus (Common squirrel monkey).